A 372-amino-acid polypeptide reads, in one-letter code: Pyrimidine monooxygenase RutA (372 aa).

Residues 57-58, N123, E132, 148-149, and S198 each bind FMN; these read IK and RY.

Belongs to the NtaA/SnaA/DszA monooxygenase family. RutA subfamily.

It carries out the reaction uracil + FMNH2 + NADH + O2 = (Z)-3-ureidoacrylate + FMN + NAD(+) + H2O + H(+). It catalyses the reaction thymine + FMNH2 + NADH + O2 = (Z)-2-methylureidoacrylate + FMN + NAD(+) + H2O + H(+). In terms of biological role, catalyzes the pyrimidine ring opening between N-3 and C-4 by an unusual flavin hydroperoxide-catalyzed mechanism, adding oxygen atoms in the process to yield ureidoacrylate peracid, that immediately reacts with FMN forming ureidoacrylate and FMN-N(5)-oxide. The FMN-N(5)-oxide reacts spontaneously with NADH to produce FMN. Requires the flavin reductase RutF to regenerate FMN in vivo. The sequence is that of Pyrimidine monooxygenase RutA from Methylorubrum extorquens (strain PA1) (Methylobacterium extorquens).